The sequence spans 664 residues: Glycine--tRNA ligase beta subunit (664 aa).

The protein belongs to the class-II aminoacyl-tRNA synthetase family. In terms of assembly, tetramer of two alpha and two beta subunits.

It is found in the cytoplasm. The enzyme catalyses tRNA(Gly) + glycine + ATP = glycyl-tRNA(Gly) + AMP + diphosphate. In Aquifex aeolicus (strain VF5), this protein is Glycine--tRNA ligase beta subunit (glyS).